A 417-amino-acid polypeptide reads, in one-letter code: NADH-quinone oxidoreductase subunit D (417 aa).

This sequence belongs to the complex I 49 kDa subunit family. In terms of assembly, NDH-1 is composed of 14 different subunits. Subunits NuoB, C, D, E, F, and G constitute the peripheral sector of the complex.

The protein localises to the cell inner membrane. It catalyses the reaction a quinone + NADH + 5 H(+)(in) = a quinol + NAD(+) + 4 H(+)(out). Functionally, NDH-1 shuttles electrons from NADH, via FMN and iron-sulfur (Fe-S) centers, to quinones in the respiratory chain. The immediate electron acceptor for the enzyme in this species is believed to be ubiquinone. Couples the redox reaction to proton translocation (for every two electrons transferred, four hydrogen ions are translocated across the cytoplasmic membrane), and thus conserves the redox energy in a proton gradient. The sequence is that of NADH-quinone oxidoreductase subunit D from Azoarcus sp. (strain BH72).